A 405-amino-acid chain; its full sequence is Nuclear RNA export factor 2 (405 aa).

A disordered region spans residues 1-33; sequence MRGQNRRGYRNIEGRLSLSSHSSHSSPRQTHVT. A compositionally biased stretch (low complexity) spans 16–26; it reads LSLSSHSSHSS. Residues 26-94 form the RRM domain; that stretch reads SPRQTHVTNL…SVVLQHIGYK (69 aa). LRR repeat units lie at residues 97–118 and 123–144; these read RISG…SSLS and FLKF…KKLG. An NTF2 domain is found at 215–382; the sequence is LVEEFIITYY…VAIVSDQLFI (168 aa).

This sequence belongs to the NXF family.

The protein resides in the nucleus. Involved in the export of cellular mRNA to the cytoplasm. Plays a role in the nuclear retention of unspliced mRNAs. The protein is Nuclear RNA export factor 2 of Caenorhabditis elegans.